The chain runs to 150 residues: MKALILYKSIHHKNTEKIAKTIADELNADIYNIDKVSPDIIENYDLIGFGSGIYFGKHHKSIFKFLDKISKTNKKAFIFSTAGFPFLKSMFHKELRDKLKSKGFEILGEFCCKGYHTYGIFKLFGGLNKNHPNEDDIKKAKEFAKSILKN.

Positions 4 to 148 (LILYKSIHHK…KAKEFAKSIL (145 aa)) constitute a Flavodoxin-like domain.

This is an uncharacterized protein from Methanocaldococcus jannaschii (strain ATCC 43067 / DSM 2661 / JAL-1 / JCM 10045 / NBRC 100440) (Methanococcus jannaschii).